The following is a 354-amino-acid chain: Protein RecA (354 aa).

67 to 74 (GPESSGKT) is a binding site for ATP.

It belongs to the RecA family.

The protein resides in the cytoplasm. Functionally, can catalyze the hydrolysis of ATP in the presence of single-stranded DNA, the ATP-dependent uptake of single-stranded DNA by duplex DNA, and the ATP-dependent hybridization of homologous single-stranded DNAs. It interacts with LexA causing its activation and leading to its autocatalytic cleavage. This chain is Protein RecA, found in Haemophilus influenzae (strain 86-028NP).